Reading from the N-terminus, the 204-residue chain is Large ribosomal subunit protein uL10 (204 aa).

A disordered region spans residues 170–204; sequence AADPSVIGGAGEASDQEPKTTETPEASAAQDNTNE. Positions 192–204 are enriched in polar residues; sequence TPEASAAQDNTNE.

Belongs to the universal ribosomal protein uL10 family. In terms of assembly, part of the ribosomal stalk of the 50S ribosomal subunit. The N-terminus interacts with L11 and the large rRNA to form the base of the stalk. The C-terminus forms an elongated spine to which L12 dimers bind in a sequential fashion forming a multimeric L10(L12)X complex.

Functionally, forms part of the ribosomal stalk, playing a central role in the interaction of the ribosome with GTP-bound translation factors. The chain is Large ribosomal subunit protein uL10 from Cutibacterium acnes (strain DSM 16379 / KPA171202) (Propionibacterium acnes).